Here is a 264-residue protein sequence, read N- to C-terminus: Matrilysin (264 aa).

An N-terminal signal peptide occupies residues 1–17; the sequence is MQLTLFCFVCLLPGHLA. Positions 18–94 are cleaved as a propeptide — activation peptide; that stretch reads LPLSQEAGDV…PRCGVPDVAE (77 aa). Residues 85 to 92 carry the Cysteine switch motif; sequence PRCGVPDV. Residue Cys87 participates in Zn(2+) binding. Residue Asp153 coordinates Ca(2+). His163 and Asp165 together coordinate Zn(2+). Ca(2+) contacts are provided by Asp170, Gly171, Gly173, and Thr175. Residue His178 participates in Zn(2+) binding. Ca(2+) contacts are provided by Gly185, Gly187, and Asp189. His191 is a Zn(2+) binding site. Positions 193 and 196 each coordinate Ca(2+). Residue His214 participates in Zn(2+) binding. Glu215 is a catalytic residue. Zn(2+) is bound by residues His218 and His224.

The protein belongs to the peptidase M10A family. Ca(2+) is required as a cofactor. Zn(2+) serves as cofactor. As to expression, expressed in the intestinal epithelium (at protein level).

The protein localises to the secreted. It is found in the extracellular space. It localises to the extracellular matrix. It carries out the reaction Cleavage of 14-Ala-|-Leu-15 and 16-Tyr-|-Leu-17 in B chain of insulin. No action on collagen types I, II, IV, V. Cleaves gelatin chain alpha2(I) &gt; alpha1(I).. Its function is as follows. Degrades casein, gelatins of types I, III, IV, and V, and fibronectin. Activates procollagenase. Functionally, may play a role in tissue reorganization. In Mus musculus (Mouse), this protein is Matrilysin (Mmp7).